Here is a 66-residue protein sequence, read N- to C-terminus: Large ribosomal subunit protein bL35 (66 aa).

Positions 1–16 (MPKQKTHRASAKRFKR) are enriched in basic residues. The disordered stretch occupies residues 1-20 (MPKQKTHRASAKRFKRTGSG).

It belongs to the bacterial ribosomal protein bL35 family.

The polypeptide is Large ribosomal subunit protein bL35 (Streptococcus thermophilus (strain CNRZ 1066)).